A 178-amino-acid polypeptide reads, in one-letter code: Cytidylate kinase 2 (178 aa).

An ATP-binding site is contributed by 7–15 (GKSGCGNTT).

It belongs to the cytidylate kinase family. Type 2 subfamily.

The protein resides in the cytoplasm. The catalysed reaction is CMP + ATP = CDP + ADP. The enzyme catalyses dCMP + ATP = dCDP + ADP. The protein is Cytidylate kinase 2 of Borreliella afzelii (strain PKo) (Borrelia afzelii).